The following is a 1036-amino-acid chain: ADAMTS-like protein 4 (1036 aa).

The N-terminal stretch at 1-24 (MESWLGRLWLCMMLLLPLPQPCQD) is a signal peptide. The TSP type-1 1 domain occupies 47–91 (GPWGRWASCSQPCGVGVQRRSRTCELHPALPLPPRPPRHPEAHRP). Disordered regions lie at residues 73–149 (HPAL…IKPG) and 163–308 (HRSR…WLPL). Residues 163 to 173 (HRSRRHPHRPG) show a composition bias toward basic residues. Polar residues predominate over residues 215–253 (TPRSGTAQTEVLPRTSSAPSYTGTPAPTSSFGDSRSFQG). N-linked (GlcNAc...) asparagine glycans are attached at residues asparagine 454 and asparagine 737. TSP type-1 domains follow at residues 687–748 (CPPY…HLCG), 750–804 (WEIS…DMGP), 805–871 (CTTA…GPCE), 872–931 (RTWR…QGQA), and 932–988 (CEDK…QPCN). The PLAC domain occupies 991 to 1028 (PDDQCKDSSPHCPLVVQARLCVYPYYTTTCCRSCAHVL).

As to quaternary structure, interacts with CTSB. Interacts with FBN1. In terms of processing, glycosylated. Can be O-fucosylated by POFUT2 on a serine or a threonine residue found within the consensus sequence C1-X(2)-(S/T)-C2-G of the TSP type-1 repeat domains where C1 and C2 are the first and second cysteine residue of the repeat, respectively. Fucosylated repeats can then be further glycosylated by the addition of a beta-1,3-glucose residue by the glucosyltransferase, B3GALTL. Fucosylation mediates the efficient secretion of ADAMTS family members. Can also be C-glycosylated with one or two mannose molecules on tryptophan residues within the consensus sequence W-X-X-W of the TPRs, and N-glycosylated. These other glycosylations can also facilitate secretion. Widely expressed in a range of tissues. Especially prevalent in brain, spinal cord, muscle, lung and heart.

The protein resides in the secreted. Its subcellular location is the extracellular space. It is found in the extracellular matrix. Its function is as follows. Positive regulation of apoptosis. May facilitate FBN1 microfibril biogenesis. This is ADAMTS-like protein 4 from Mus musculus (Mouse).